Reading from the N-terminus, the 216-residue chain is MTQDNDAKFIEQGRKLFAGDWQFIWASPSIETLPPMAGLEVAFAGRSNVGKSSLINALTGRNALARTSHTPGRTQELIFFEGPENANFRLVDMPGYGYASAPKAKIASWTSLIHNFLQGRSTLARVYVLIDARHGLKEVDQDVLNTLDKSAVSYQVVLTKADQVKPAELAQCRIDVEAGLRKHPAAYPELLVTSSRTGAGMPELRAAMIKLIAERS.

An EngB-type G domain is found at 37–214 (AGLEVAFAGR…RAAMIKLIAE (178 aa)). GTP contacts are provided by residues 45-52 (GRSNVGKS), 72-76 (GRTQE), 92-95 (DMPG), 159-162 (TKAD), and 193-195 (TSS). Ser52 and Thr74 together coordinate Mg(2+).

This sequence belongs to the TRAFAC class TrmE-Era-EngA-EngB-Septin-like GTPase superfamily. EngB GTPase family. Mg(2+) serves as cofactor.

In terms of biological role, necessary for normal cell division and for the maintenance of normal septation. The sequence is that of Probable GTP-binding protein EngB from Rhodopseudomonas palustris (strain BisB18).